Reading from the N-terminus, the 611-residue chain is U-box domain-containing protein 12 (611 aa).

In terms of domain architecture, U-box spans isoleucine 227–glutamate 301. 4 ARM repeats span residues valine 355–isoleucine 394, glutamate 396–valine 435, aspartate 437–isoleucine 476, and glutamine 478–glycine 517.

The enzyme catalyses S-ubiquitinyl-[E2 ubiquitin-conjugating enzyme]-L-cysteine + [acceptor protein]-L-lysine = [E2 ubiquitin-conjugating enzyme]-L-cysteine + N(6)-ubiquitinyl-[acceptor protein]-L-lysine.. It participates in protein modification; protein ubiquitination. Its function is as follows. Possesses E3 ubiquitin-protein ligase in vitro. The chain is U-box domain-containing protein 12 (PUB12) from Oryza sativa subsp. japonica (Rice).